A 426-amino-acid polypeptide reads, in one-letter code: MDERQTVLPLTVHLLASSGDSLAFQLAVDRLLHRICPDVRLFLVSERAAPIKLYECQTKRPEFPGISVTLFLREDLGEERIDLLQSFFQLPPWTHVIADFQQGRSCPFKLPLCDYYSLDSHMPVWEMRHVHYGTEIVRLTVYCSCDNYEDAVRLYETILQKEATTQKAGFCFFVLYSTTHVSVQLSIKQLHPGISVQVKDACALQFAIHAVGQLVPLLPYPCVPISDARWQTQDYDGNKILLLVVDHTTATQRKAESKAASTLMVIPDNPSLPFTSLNRSMEAKVQNAKDTINPKNISVSSNYLDQSETIYNNTNPSQKLLAPHGIQMKETESNVDTGYTVVSLTSQQAYICELSENQQSAPAFEDIYFSTSQRKSPQNLPFKLEESSSSDVVEGSKALGMTGSMFHSERYQIHNSNISEEEEFFI.

Belongs to the FAM124 family.

It is found in the nucleus. The chain is Protein FAM124B (fam124b) from Xenopus tropicalis (Western clawed frog).